We begin with the raw amino-acid sequence, 89 residues long: Putative membrane protein insertion efficiency factor (89 aa).

Positions 68–89 are disordered; sequence VPPPNSDARNAPHEAEASSHRL. The segment covering 77 to 89 has biased composition (basic and acidic residues); sequence NAPHEAEASSHRL.

Belongs to the UPF0161 family.

The protein localises to the cell inner membrane. Could be involved in insertion of integral membrane proteins into the membrane. This chain is Putative membrane protein insertion efficiency factor, found in Burkholderia mallei (strain SAVP1).